The chain runs to 593 residues: Pyruvate decarboxylase 1 (593 aa).

The segment covering 1–19 (METETETPNGSTPCPTSAP) has biased composition (polar residues). Positions 1-20 (METETETPNGSTPCPTSAPS) are disordered. The substrate site is built by aspartate 55 and histidine 142. The thiamine pyrophosphate binding stretch occupies residues 420–502 (DSWFNCQKLR…FLINNGGYTI (83 aa)). Mg(2+) is bound by residues aspartate 470, asparagine 497, and glycine 499. Glutamate 503 lines the substrate pocket.

The protein belongs to the TPP enzyme family. As to quaternary structure, homotetramer. It depends on a metal cation as a cofactor. Thiamine diphosphate serves as cofactor.

It carries out the reaction a 2-oxocarboxylate + H(+) = an aldehyde + CO2. In Pisum sativum (Garden pea), this protein is Pyruvate decarboxylase 1 (PDC1).